Reading from the N-terminus, the 225-residue chain is NAD(P)H-quinone oxidoreductase subunit K, chloroplastic (225 aa).

Residues Cys-43, Cys-44, Cys-108, and Cys-139 each coordinate [4Fe-4S] cluster.

The protein belongs to the complex I 20 kDa subunit family. As to quaternary structure, NDH is composed of at least 16 different subunits, 5 of which are encoded in the nucleus. The cofactor is [4Fe-4S] cluster.

The protein resides in the plastid. The protein localises to the chloroplast thylakoid membrane. It catalyses the reaction a plastoquinone + NADH + (n+1) H(+)(in) = a plastoquinol + NAD(+) + n H(+)(out). The catalysed reaction is a plastoquinone + NADPH + (n+1) H(+)(in) = a plastoquinol + NADP(+) + n H(+)(out). NDH shuttles electrons from NAD(P)H:plastoquinone, via FMN and iron-sulfur (Fe-S) centers, to quinones in the photosynthetic chain and possibly in a chloroplast respiratory chain. The immediate electron acceptor for the enzyme in this species is believed to be plastoquinone. Couples the redox reaction to proton translocation, and thus conserves the redox energy in a proton gradient. The protein is NAD(P)H-quinone oxidoreductase subunit K, chloroplastic of Solanum bulbocastanum (Wild potato).